A 467-amino-acid chain; its full sequence is ATP synthase subunit beta (467 aa).

Residue 156–163 (GGAGVGKT) participates in ATP binding.

The protein belongs to the ATPase alpha/beta chains family. As to quaternary structure, F-type ATPases have 2 components, CF(1) - the catalytic core - and CF(0) - the membrane proton channel. CF(1) has five subunits: alpha(3), beta(3), gamma(1), delta(1), epsilon(1). CF(0) has three main subunits: a(1), b(2) and c(9-12). The alpha and beta chains form an alternating ring which encloses part of the gamma chain. CF(1) is attached to CF(0) by a central stalk formed by the gamma and epsilon chains, while a peripheral stalk is formed by the delta and b chains.

It is found in the cell inner membrane. The enzyme catalyses ATP + H2O + 4 H(+)(in) = ADP + phosphate + 5 H(+)(out). In terms of biological role, produces ATP from ADP in the presence of a proton gradient across the membrane. The catalytic sites are hosted primarily by the beta subunits. In Cupriavidus metallidurans (strain ATCC 43123 / DSM 2839 / NBRC 102507 / CH34) (Ralstonia metallidurans), this protein is ATP synthase subunit beta.